Reading from the N-terminus, the 351-residue chain is Beta-1,4-xylosyltransferase IRX9 (351 aa).

The Cytoplasmic segment spans residues 1–16 (MGSLERSKKKAQVWKK). Residues 17 to 36 (AVIHFSLCFVMGFFTGFAPA) form a helical; Signal-anchor for type II membrane protein membrane-spanning segment. At 37–351 (GKASFFSNFE…KFPTRTRLST (315 aa)) the chain is on the lumenal side. 2 N-linked (GlcNAc...) asparagine glycosylation sites follow: Asn-64 and Asn-74. The disordered stretch occupies residues 80–107 (SQSQAPAPAESREAEGETRSLSEKEDEN). Positions 89-107 (ESREAEGETRSLSEKEDEN) are enriched in basic and acidic residues. N-linked (GlcNAc...) asparagine glycosylation is found at Asn-271 and Asn-287.

The protein belongs to the glycosyltransferase 43 family. Expressed in developing interfascicular fibers, primary and secondary xylem in stems and developing secondary xylem in roots.

Its subcellular location is the golgi apparatus membrane. It carries out the reaction [(1-&gt;4)-beta-D-xylan](n) + UDP-alpha-D-xylose = [(1-&gt;4)-beta-D-xylan](n+1) + UDP + H(+). In terms of biological role, involved in the synthesis of the hemicellulose glucuronoxylan, a major component of secondary cell walls. Xylan xylosyltransferase that acts cooperatively with IRX14 to achieve the successive addition of xylosyl residues during xylan backbone elongation. The sequence is that of Beta-1,4-xylosyltransferase IRX9 from Arabidopsis thaliana (Mouse-ear cress).